Here is a 218-residue protein sequence, read N- to C-terminus: Glutathione S-transferase Mu 2 (218 aa).

A GST N-terminal domain is found at 2–88 (PMTLGYWNIR…YIARKHNLCG (87 aa)). 7–8 (YW) serves as a coordination point for glutathione. S27 and S44 each carry phosphoserine. Glutathione-binding positions include 43 to 46 (RSQW), K50, 59 to 60 (NL), and 72 to 73 (QS). In terms of domain architecture, GST C-terminal spans 90-208 (SEKEQIREDI…KSSRFLPRPV (119 aa)). Y116 is a binding site for substrate.

The protein belongs to the GST superfamily. Mu family. As to quaternary structure, homodimer. Muscle.

It is found in the cytoplasm. It catalyses the reaction RX + glutathione = an S-substituted glutathione + a halide anion + H(+). The catalysed reaction is 11(S)-hydroxy-14(S),15(S)-epoxy-(5Z,8Z,12E)-eicosatrienoate + glutathione = (11S,15S)-dihydroxy-14(R)-S-glutathionyl-(5Z,8Z,12E)-eicosatrienoate. Conjugation of reduced glutathione to a wide number of exogenous and endogenous hydrophobic electrophiles. Participates in the formation of novel hepoxilin regioisomers. In Homo sapiens (Human), this protein is Glutathione S-transferase Mu 2.